Consider the following 181-residue polypeptide: Ribonuclease HII (181 aa).

In terms of domain architecture, RNase H type-2 spans Met-1–Ile-181. The a divalent metal cation site is built by Asp-6, Glu-7, and Asp-98.

The protein belongs to the RNase HII family. The cofactor is Mn(2+). It depends on Mg(2+) as a cofactor.

It is found in the cytoplasm. It catalyses the reaction Endonucleolytic cleavage to 5'-phosphomonoester.. Its function is as follows. Endonuclease that specifically degrades the RNA of RNA-DNA hybrids. The sequence is that of Ribonuclease HII from Borreliella afzelii (strain PKo) (Borrelia afzelii).